The sequence spans 300 residues: Tyrosine recombinase XerC (300 aa).

The 87-residue stretch at 2-88 (TQEGKLEQQF…SLRSFYTFLL (87 aa)) folds into the Core-binding (CB) domain. In terms of domain architecture, Tyr recombinase spans 109-294 (RLPKFFYSEE…TKEHLKSTYM (186 aa)). Residues Arg-150, Lys-174, His-246, Arg-249, and His-272 contribute to the active site. Tyr-281 (O-(3'-phospho-DNA)-tyrosine intermediate) is an active-site residue.

It belongs to the 'phage' integrase family. XerC subfamily. As to quaternary structure, forms a cyclic heterotetrameric complex composed of two molecules of XerC and two molecules of XerD.

It is found in the cytoplasm. Site-specific tyrosine recombinase, which acts by catalyzing the cutting and rejoining of the recombining DNA molecules. The XerC-XerD complex is essential to convert dimers of the bacterial chromosome into monomers to permit their segregation at cell division. It also contributes to the segregational stability of plasmids. This is Tyrosine recombinase XerC from Listeria welshimeri serovar 6b (strain ATCC 35897 / DSM 20650 / CCUG 15529 / CIP 8149 / NCTC 11857 / SLCC 5334 / V8).